The following is a 146-amino-acid chain: MKSLYLIFGLWILLACFQSGEGVRGPRRQHNPRRQQDPSTLPHYLGLQPDPNGGQIGVTITIPLNLQPPRVLVNLPGFITGPPLVVQGTTEYQYQWQLTAPDPTPLSNPPTQLHSTEQANTKTDAKISNTTATTQNSTDIFEGGGK.

An N-terminal signal peptide occupies residues 1 to 22 (MKSLYLIFGLWILLACFQSGEG). Disordered regions lie at residues 23–43 (VRGPRRQHNPRRQQDPSTLPH) and 99–146 (TAPD…GGGK). Polar residues predominate over residues 109–139 (PPTQLHSTEQANTKTDAKISNTTATTQNSTD). N-linked (GlcNAc...) asparagine glycosylation is found at Asn-129 and Asn-136.

Several O-linked glycosylation sites might be present in the C-terminal part. As to expression, expressed predominantly in the acinar cells of the submandibular gland and to lesser extent in the prostate.

It localises to the secreted. Functionally, sialorphin may be involved in the modulation of mineral balance between at least four systems: kidney, bone, tooth and circulation. In terms of biological role, submandibular gland peptide T is able to directly or indirectly down-regulate cardiovascular depression induced by septic shock (endotoxin stimuli), or anaphylactic challenge (nematode antigen sensitization). Sialorphin is an endogenous inhibitor of neprilysin. Inhibits the breakdown of Met-enkephalin and substance P in isolated tissue from the dorsal zone of the rat spinal cord. Has an analgesic effect when administered to rats by intravenous injection. The protein is SMR1 protein (Vcsa1) of Rattus norvegicus (Rat).